The following is a 509-amino-acid chain: Tyrosine-protein phosphatase non-receptor type substrate 1 (509 aa).

Residues 1 to 31 form the signal peptide; sequence MEPAGPAPGRLGPLLFCLLLSASCFCAGASG. The 107-residue stretch at 32 to 138 folds into the Ig-like V-type domain; that stretch reads KELKVTQADK…IVEPDTEIKS (107 aa). At 32-373 the chain is on the extracellular side; that stretch reads KELKVTQADK…PDNNAYYNWN (342 aa). Residues N54, N93, N169, N181, N205, N209, N242, N246, N271, N293, N312, N320, and N345 are each glycosylated (N-linked (GlcNAc...) asparagine). C55 and C122 are joined by a disulfide. Ig-like C1-type domains lie at 150–248 and 255–349; these read PSSP…ANFS and PTLK…HTVR. A disulfide bridge connects residues C172 and C229. Residues C274 and C332 are joined by a disulfide bond. Residues 374 to 394 traverse the membrane as a helical segment; the sequence is VFIGVGVACALLVVLLMAALY. At 395-509 the chain is on the cytoplasmic side; it reads LLRIKQKKAK…EYASVQVQRK (115 aa). A Phosphotyrosine; by Tyr-kinases modification is found at Y436. Positions 436–439 match the SH2-binding motif; it reads YADL. The segment at 441 to 472 is disordered; sequence LPKEKKPAPRVPEPNNHTEYASIETGKLPRPE. The SH3-binding signature appears at 446-451; sequence KPAPRV. Phosphotyrosine; by Tyr-kinases occurs at positions 460, 477, and 501. 3 short sequence motifs (SH2-binding) span residues 460 to 463, 477 to 480, and 501 to 504; these read YASI, YADL, and YASV. The segment at 485–509 is disordered; that stretch reads LNRAQPTPKPEPSFSEYASVQVQRK. Residues 500 to 509 are compositionally biased toward polar residues; that stretch reads EYASVQVQRK.

As to quaternary structure, binds PTPN11 when tyrosine-phosphorylated, except in macrophages, where it primarily binds PTPN6. Binds GRB2 in vitro. Binds FGR. Binds JAK2 irrespective of its phosphorylation status and forms a stable complex. Binds SCAP1 and/or SCAP2. The resulting complex recruits FYB1. Binds PTK2B. Interacts with TRIM2. Post-translationally, N-glycosylated. Phosphorylated on tyrosine residues in response to insulin, cell adhesion or epidermal growth factors. Dephosphorylated by PTPN11. As to expression, highly expressed in brain, spleen, lung, liver and kidney. Detected at lower levels in heart. Highly expressed in alveolar and peritoneal macrophages, and at lower levels in dendritic cells.

The protein localises to the membrane. In terms of biological role, immunoglobulin-like cell surface receptor for CD47. Acts as docking protein and induces translocation of PTPN6, PTPN11 and other binding partners from the cytosol to the plasma membrane. Supports adhesion of cerebellar neurons, neurite outgrowth and glial cell attachment. May play a key role in intracellular signaling during synaptogenesis and in synaptic function. Involved in the negative regulation of receptor tyrosine kinase-coupled cellular responses induced by cell adhesion, growth factors or insulin. Mediates negative regulation of phagocytosis, mast cell activation and dendritic cell activation. CD47 binding prevents maturation of immature dendritic cells and inhibits cytokine production by mature dendritic cells. Plays a role in antiviral immunity and limits new world arenavirus infection by decreasing virus internalization. Receptor for THBS1. Interaction with THBS1 stimulates phosphorylation of SIRPA. In response to THBS1, involved in ROS signaling in non-phagocytic cells, stimulating NADPH oxidase-derived ROS production. In Rattus norvegicus (Rat), this protein is Tyrosine-protein phosphatase non-receptor type substrate 1 (Sirpa).